We begin with the raw amino-acid sequence, 39 residues long: Photosystem II reaction center protein L (39 aa).

The chain crosses the membrane as a helical span at residues 18 to 38 (SLYLGLLLIAVLGILFSSYFF).

This sequence belongs to the PsbL family. In terms of assembly, PSII is composed of 1 copy each of membrane proteins PsbA, PsbB, PsbC, PsbD, PsbE, PsbF, PsbH, PsbI, PsbJ, PsbK, PsbL, PsbM, PsbT, PsbX, PsbY, PsbZ, Psb30/Ycf12, peripheral proteins PsbO, CyanoQ (PsbQ), PsbU, PsbV and a large number of cofactors. It forms dimeric complexes.

The protein localises to the cellular thylakoid membrane. In terms of biological role, one of the components of the core complex of photosystem II (PSII). PSII is a light-driven water:plastoquinone oxidoreductase that uses light energy to abstract electrons from H(2)O, generating O(2) and a proton gradient subsequently used for ATP formation. It consists of a core antenna complex that captures photons, and an electron transfer chain that converts photonic excitation into a charge separation. This subunit is found at the monomer-monomer interface and is required for correct PSII assembly and/or dimerization. This Picosynechococcus sp. (strain ATCC 27264 / PCC 7002 / PR-6) (Agmenellum quadruplicatum) protein is Photosystem II reaction center protein L.